We begin with the raw amino-acid sequence, 592 residues long: V-type ATP synthase alpha chain (592 aa).

232-239 (GPFGAGKT) is an ATP binding site.

This sequence belongs to the ATPase alpha/beta chains family.

It carries out the reaction ATP + H2O + 4 H(+)(in) = ADP + phosphate + 5 H(+)(out). In terms of biological role, produces ATP from ADP in the presence of a proton gradient across the membrane. The V-type alpha chain is a catalytic subunit. The chain is V-type ATP synthase alpha chain from Clostridium botulinum (strain Eklund 17B / Type B).